A 333-amino-acid polypeptide reads, in one-letter code: Putative fimbrium anchoring subunit Fim4B (333 aa).

The first 20 residues, 1–20 (MRNTRYGFLVLLSSLLMLTG), serve as a signal peptide directing secretion. Residue Cys21 is the site of N-palmitoyl cysteine attachment. Cys21 carries the S-diacylglycerol cysteine lipid modification. Positions 274–333 (ENAGTGEDGKPTPPPEIELPPDDKIEVDKPETPPNPDGGGGMGGNVDGWGPEDNVELPVN) are disordered. Basic and acidic residues predominate over residues 294 to 304 (PDDKIEVDKPE). Over residues 310–320 (DGGGGMGGNVD) the composition is skewed to gly residues.

Belongs to the bacteroidetes fimbrillin superfamily. FimB/Mfa2 family.

It is found in the cell outer membrane. Functionally, putative fimbrium anchoring subunit. This chain is Putative fimbrium anchoring subunit Fim4B, found in Bacteroides ovatus (strain ATCC 8483 / DSM 1896 / JCM 5824 / BCRC 10623 / CCUG 4943 / NCTC 11153).